The sequence spans 253 residues: Glutamate racemase (253 aa).

Residues aspartate 7–serine 8 and tyrosine 39–glycine 40 each bind substrate. The active-site Proton donor/acceptor is cysteine 70. Asparagine 71–serine 72 is a substrate binding site. Cysteine 179 serves as the catalytic Proton donor/acceptor. Threonine 180 to histidine 181 contacts substrate.

Belongs to the aspartate/glutamate racemases family.

It carries out the reaction L-glutamate = D-glutamate. The protein operates within cell wall biogenesis; peptidoglycan biosynthesis. Functionally, provides the (R)-glutamate required for cell wall biosynthesis. The sequence is that of Glutamate racemase from Nitratiruptor sp. (strain SB155-2).